Here is a 73-residue protein sequence, read N- to C-terminus: Translation initiation factor IF-1 (73 aa).

The S1-like domain maps to 1–72 (MAKDEIIEFE…SKGRITYRGK (72 aa)).

It belongs to the IF-1 family. As to quaternary structure, component of the 30S ribosomal translation pre-initiation complex which assembles on the 30S ribosome in the order IF-2 and IF-3, IF-1 and N-formylmethionyl-tRNA(fMet); mRNA recruitment can occur at any time during PIC assembly.

Its subcellular location is the cytoplasm. Its function is as follows. One of the essential components for the initiation of protein synthesis. Stabilizes the binding of IF-2 and IF-3 on the 30S subunit to which N-formylmethionyl-tRNA(fMet) subsequently binds. Helps modulate mRNA selection, yielding the 30S pre-initiation complex (PIC). Upon addition of the 50S ribosomal subunit IF-1, IF-2 and IF-3 are released leaving the mature 70S translation initiation complex. This chain is Translation initiation factor IF-1, found in Psychrobacter arcticus (strain DSM 17307 / VKM B-2377 / 273-4).